The sequence spans 338 residues: RNA 3'-terminal phosphate cyclase (338 aa).

ATP-binding positions include Q103 and 283–287 (YLADQ). Catalysis depends on H308, which acts as the Tele-AMP-histidine intermediate.

It belongs to the RNA 3'-terminal cyclase family. Type 1 subfamily.

It is found in the cytoplasm. It carries out the reaction a 3'-end 3'-phospho-ribonucleotide-RNA + ATP = a 3'-end 2',3'-cyclophospho-ribonucleotide-RNA + AMP + diphosphate. Functionally, catalyzes the conversion of 3'-phosphate to a 2',3'-cyclic phosphodiester at the end of RNA. The mechanism of action of the enzyme occurs in 3 steps: (A) adenylation of the enzyme by ATP; (B) transfer of adenylate to an RNA-N3'P to produce RNA-N3'PP5'A; (C) and attack of the adjacent 2'-hydroxyl on the 3'-phosphorus in the diester linkage to produce the cyclic end product. The biological role of this enzyme is unknown but it is likely to function in some aspects of cellular RNA processing. The chain is RNA 3'-terminal phosphate cyclase from Escherichia coli O9:H4 (strain HS).